The sequence spans 501 residues: Myrosinase MA1 (501 aa).

Cystine bridges form between cysteine 6–cysteine 438, cysteine 14–cysteine 434, and cysteine 206–cysteine 214. N-linked (GlcNAc...) asparagine glycosylation occurs at asparagine 21. Residue glutamine 39 participates in substrate binding. Histidine 56 lines the Zn(2+) pocket. N-linked (GlcNAc...) asparagine glycosylation is present at asparagine 60. Position 70 (aspartate 70) interacts with Zn(2+). Asparagine 90 carries N-linked (GlcNAc...) asparagine glycosylation. Residues histidine 141 and asparagine 186 each coordinate substrate. Glutamine 187 contributes to the L-ascorbate binding site. N-linked (GlcNAc...) asparagine glycans are attached at residues asparagine 218 and asparagine 244. Residue arginine 259 coordinates L-ascorbate. N-linked (GlcNAc...) asparagine glycosylation is found at asparagine 265 and asparagine 292. Tyrosine 330 serves as a coordination point for substrate. N-linked (GlcNAc...) asparagine glycosylation is found at asparagine 343, asparagine 346, and asparagine 361. Glutamate 409 functions as the Nucleophile in the catalytic mechanism. Residues tryptophan 457 and 464–465 (EF) each bind substrate. The N-linked (GlcNAc...) asparagine glycan is linked to asparagine 482.

It belongs to the glycosyl hydrolase 1 family. In terms of assembly, homodimer. As to expression, in vacuoles called myrosin grains of a certain class of cells, myrosin cells, distributed in the cotyledons and the axis of the embryo as well as in different organs of the growing plant.

It localises to the vacuole. It catalyses the reaction a thioglucoside + H2O = a sugar + a thiol.. Degradation of glucosinolates (glucose residue linked by a thioglucoside bound to an amino acid derivative) to glucose, sulfate and any of the products: thiocyanates, isothiocyanates, nitriles, epithionitriles or oxazolidine-2-thiones. The polypeptide is Myrosinase MA1 (Sinapis alba (White mustard)).